A 426-amino-acid chain; its full sequence is Cytochrome b-c1 complex subunit 2, mitochondrial (426 aa).

Residues 1 to 30 (MKSFTRNLRRFQTPRRNLHGISYTPKKVEG) constitute a mitochondrion transit peptide.

The protein belongs to the peptidase M16 family. UQCRC2/QCR2 subfamily. As to quaternary structure, component of the ubiquinol-cytochrome c oxidoreductase (cytochrome b-c1 complex, complex III, CIII), a multisubunit enzyme composed of 3 respiratory subunits cytochrome b, cytochrome c1 and Rieske protein, 2 core protein subunits, and additional low-molecular weight protein subunits. The complex exists as an obligatory dimer and forms supercomplexes (SCs) in the inner mitochondrial membrane with cytochrome c oxidase (complex IV, CIV).

Its subcellular location is the mitochondrion inner membrane. Component of the ubiquinol-cytochrome c oxidoreductase, a multisubunit transmembrane complex that is part of the mitochondrial electron transport chain which drives oxidative phosphorylation. The respiratory chain contains 3 multisubunit complexes succinate dehydrogenase (complex II, CII), ubiquinol-cytochrome c oxidoreductase (cytochrome b-c1 complex, complex III, CIII) and cytochrome c oxidase (complex IV, CIV), that cooperate to transfer electrons derived from NADH and succinate to molecular oxygen, creating an electrochemical gradient over the inner membrane that drives transmembrane transport and the ATP synthase. The cytochrome b-c1 complex catalyzes electron transfer from ubiquinol to cytochrome c, linking this redox reaction to translocation of protons across the mitochondrial inner membrane, with protons being carried across the membrane as hydrogens on the quinol. In the process called Q cycle, 2 protons are consumed from the matrix, 4 protons are released into the intermembrane space and 2 electrons are passed to cytochrome c. The protein is Cytochrome b-c1 complex subunit 2, mitochondrial (qcr2) of Schizosaccharomyces pombe (strain 972 / ATCC 24843) (Fission yeast).